A 93-amino-acid polypeptide reads, in one-letter code: YcgL domain-containing protein Ssed_2518 (93 aa).

Positions 1 to 85 (MICAVYKSRR…PKVNLLEQHK (85 aa)) constitute a YcgL domain.

The chain is YcgL domain-containing protein Ssed_2518 from Shewanella sediminis (strain HAW-EB3).